Here is a 63-residue protein sequence, read N- to C-terminus: Large ribosomal subunit protein uL29 (63 aa).

It belongs to the universal ribosomal protein uL29 family.

This chain is Large ribosomal subunit protein uL29, found in Bordetella petrii (strain ATCC BAA-461 / DSM 12804 / CCUG 43448).